Reading from the N-terminus, the 370-residue chain is E3 ubiquitin-protein ligase E3D (370 aa).

An N-acetylalanine modification is found at alanine 2. A BRAT1-like motif motif is present at residues 129–159 (PLPSENWSALVGEWCCHPDPFANKPLHPREN). Cysteine 144 provides a ligand contact to Zn(2+). The interaction with UBE2C stretch occupies residues 214–236 (QPSEGSFPNIPRSQFVQSVIARC). Residues 332-368 (LPSTTCLELLLILSRNNASLPLSLRQMNSFQLWCSHC) are HECT-like.

As to quaternary structure, interacts with UBE2C/UbcH10 (E2 ubiquitin-conjugating enzyme). In vitro, interacts with cyclin-B. In terms of processing, ubiquitinated by UBCH10 (E2 ubiquitin-conjugating enzyme).

Its subcellular location is the cytoplasm. The enzyme catalyses S-ubiquitinyl-[E2 ubiquitin-conjugating enzyme]-L-cysteine + [acceptor protein]-L-lysine = [E2 ubiquitin-conjugating enzyme]-L-cysteine + N(6)-ubiquitinyl-[acceptor protein]-L-lysine.. It functions in the pathway protein modification; protein ubiquitination. Functionally, E3 ubiquitin-protein ligase which accepts ubiquitin from specific E2 ubiquitin-conjugating enzymes, and transfers it to substrates, generally promoting their degradation by the proteasome. Independently of its E3 ubiquitin-protein ligase activity, acts as an inhibitor of CPSF3 endonuclease activity by blocking CPSF3 active site. The polypeptide is E3 ubiquitin-protein ligase E3D (Ube3d) (Rattus norvegicus (Rat)).